The chain runs to 449 residues: Aminopeptidase C (449 aa).

Active-site residues include cysteine 70, histidine 364, and asparagine 385.

This sequence belongs to the peptidase C1 family. Homohexamer.

It localises to the cytoplasm. The catalysed reaction is Inactivates bleomycin B2 (a cytotoxic glycometallopeptide) by hydrolysis of a carboxyamide bond of beta-aminoalanine, but also shows general aminopeptidase activity. The specificity varies somewhat with source, but amino acid arylamides of Met, Leu and Ala are preferred.. In Lactobacillus delbrueckii subsp. lactis, this protein is Aminopeptidase C (pepC).